The following is a 340-amino-acid chain: Arginine N-succinyltransferase subunit beta (340 aa).

The protein belongs to the succinylarginine dihydrolase family. As to quaternary structure, heterotetramer of two alpha and two beta subunits.

It carries out the reaction succinyl-CoA + L-arginine = N(2)-succinyl-L-arginine + CoA + H(+). It functions in the pathway amino-acid degradation; L-arginine degradation via AST pathway; L-glutamate and succinate from L-arginine: step 1/5. This Pseudomonas aeruginosa (strain ATCC 15692 / DSM 22644 / CIP 104116 / JCM 14847 / LMG 12228 / 1C / PRS 101 / PAO1) protein is Arginine N-succinyltransferase subunit beta (aruG).